A 189-amino-acid polypeptide reads, in one-letter code: GTPase NRas (189 aa).

Residues 10 to 18 and 29 to 30 contribute to the GTP site; these read GAGGVGKSA and VD. Positions 32 to 40 match the Effector region motif; that stretch reads YDPTIEDSY. 57 to 61 is a binding site for GTP; that stretch reads DTAGQ. Ser-89 carries the phosphoserine modification. 116 to 119 serves as a coordination point for GTP; sequence NKCD. The interval 166–185 is hypervariable region; it reads YRMKKLNSSEDGTQGCMGLP. Lys-170 is covalently cross-linked (Glycyl lysine isopeptide (Lys-Gly) (interchain with G-Cter in ubiquitin)). Residue Cys-181 is the site of S-palmitoyl cysteine attachment. Residue Cys-186 is the site of S-farnesyl cysteine attachment. Residues 187 to 189 constitute a propeptide, removed in mature form; sequence VVM.

Belongs to the small GTPase superfamily. Ras family. In terms of assembly, interacts (active GTP-bound form preferentially) with RGS14. Interacts (active GTP-bound form) with RASSF7. Interacts (active GTP-bound form) with both SHOC2 and PP1c (all isoforms) to form a tertiary complex; SHOC2 and PP1c preferably bind M-Ras/MRAS, but they also bind K-Ras/KRAS, N-Ras/NRAS and H-Ras/HRAS. In terms of processing, palmitoylated by the ZDHHC9-GOLGA7 complex. Depalmitoylated by ABHD17A, ABHD17B and ABHD17C. A continuous cycle of de- and re-palmitoylation regulates rapid exchange between plasma membrane and Golgi. Post-translationally, acetylation at Lys-104 prevents interaction with guanine nucleotide exchange factors (GEFs). Ubiquitinated by the BCR(LZTR1) E3 ubiquitin ligase complex at Lys-170 in a non-degradative manner, leading to inhibit Ras signaling by decreasing Ras association with membranes. In terms of processing, phosphorylation at Ser-89 enhances NRAS association with its downstream effectors.

Its subcellular location is the cell membrane. The protein resides in the golgi apparatus membrane. It catalyses the reaction GTP + H2O = GDP + phosphate + H(+). With respect to regulation, alternates between an inactive form bound to GDP and an active form bound to GTP. Activated by a guanine nucleotide-exchange factor (GEF) and inactivated by a GTPase-activating protein (GAP). In terms of biological role, ras proteins bind GDP/GTP and possess intrinsic GTPase activity. The polypeptide is GTPase NRas (Nras) (Rattus norvegicus (Rat)).